The chain runs to 313 residues: tRNA dimethylallyltransferase (313 aa).

11–18 provides a ligand contact to ATP; sequence GPTAGGKT. Residue 13–18 coordinates substrate; sequence TAGGKT. Interaction with substrate tRNA regions lie at residues 36 to 39, 160 to 164, and 243 to 248; these read DSAL, QRIGR, and RCVGYR.

It belongs to the IPP transferase family. In terms of assembly, monomer. Mg(2+) is required as a cofactor.

The catalysed reaction is adenosine(37) in tRNA + dimethylallyl diphosphate = N(6)-dimethylallyladenosine(37) in tRNA + diphosphate. Functionally, catalyzes the transfer of a dimethylallyl group onto the adenine at position 37 in tRNAs that read codons beginning with uridine, leading to the formation of N6-(dimethylallyl)adenosine (i(6)A). The sequence is that of tRNA dimethylallyltransferase from Neisseria meningitidis serogroup B (strain ATCC BAA-335 / MC58).